A 1026-amino-acid chain; its full sequence is Vacuolar protein sorting-associated protein 18 homolog (1026 aa).

Residues 858-896 (IVDFLKRNKQRLEKLERSMKEATEIASEIRDKQEKLKNR) adopt a coiled-coil conformation. Residues 906 to 932 (CSHCARPISGRAFNVHSCRHFFHRECL) form an RING-type; degenerate zinc finger.

Probable core component of at least two putative endosomal tethering complexes, the homotypic fusion and vacuole protein sorting (HOPS) complex and the class C core vacuole/endosome tethering (CORVET) complex. Their common core is composed of the class C Vps proteins vps-11, vps-16 and vps-18, which in HOPS further associates with vps-33.1, vps-39 and vps-41 and in CORVET with vps-8 and vps-33.2. In terms of tissue distribution, in hermaphrodites, expressed in coelomocytes and gonadal sheath cells.

It is found in the cytoplasm. Its subcellular location is the late endosome membrane. It localises to the lysosome membrane. The protein localises to the early endosome. The protein resides in the cytoplasmic vesicle. It is found in the autophagosome. Its subcellular location is the clathrin-coated vesicle. In terms of biological role, plays a role in vesicle-mediated protein trafficking to lysosomal compartments including the endocytic membrane transport and autophagic pathways. Believed to act as a core component of the putative HOPS and CORVET endosomal tethering complexes which are proposed to be involved in the rab-5-to-rab-7 endosome conversion probably implicating sand-1, and via binding SNAREs and SNARE complexes to mediate tethering and docking events during SNARE-mediated membrane fusion. The HOPS complex is proposed to be recruited to rab-7 on the late endosomal membrane and to regulate late endocytic, phagocytic and autophagic traffic towards lysosomes. Within the HOPS complex, contributes to the normal development of gut granules in intestinal cells of the embryo, and also promotes the trafficking of embryonic intestinal gut granules away from lysosomes. The CORVET complex is proposed to function as a rab-5 effector to mediate early endosome fusion probably in specific endosome subpopulations. Required for fusion of endosomes and autophagosomes with lysosomes. Plays a role in the degradation of apoptotic cells during programmed cell death. This is Vacuolar protein sorting-associated protein 18 homolog from Caenorhabditis elegans.